The chain runs to 243 residues: uncharacterized protein (243 aa).

A signal peptide spans 1–16 (MKHFIILFLLLFVTAG). C17 carries the N-palmitoyl cysteine lipid modification. C17 carries the S-diacylglycerol cysteine lipid modification.

The protein resides in the cell membrane. This is an uncharacterized protein from Bacillus subtilis (strain 168).